The chain runs to 382 residues: Alpha-methylacyl-CoA racemase (382 aa).

Residues arginine 36 and 55-58 (LDLK) contribute to the substrate site. Lysine 58 carries the post-translational modification N6-acetyllysine. Lysine 87 is modified (N6-acetyllysine; alternate). The residue at position 87 (lysine 87) is an N6-succinyllysine; alternate. 121–126 (GHDINY) is a substrate binding site. The active-site Proton acceptor is the histidine 122. Aspartate 152 acts as the Proton donor in catalysis. An N6-succinyllysine modification is found at lysine 268. The Microbody targeting signal signature appears at 380–382 (ASL).

It belongs to the CoA-transferase III family. Monomer.

Its subcellular location is the peroxisome. It is found in the mitochondrion. The enzyme catalyses a (2S)-2-methylacyl-CoA = a (2R)-2-methylacyl-CoA. It carries out the reaction (25R)-3alpha,7alpha,12alpha-trihydroxy-5beta-cholestan-26-oyl-CoA = (25S)-3alpha,7alpha,12alpha-trihydroxy-5beta-cholestan-26-oyl-CoA. It catalyses the reaction (2R,6)-dimethylheptanoyl-CoA = (2S,6)-dimethylheptanoyl-CoA. The protein operates within lipid metabolism; bile acid biosynthesis. Its pathway is lipid metabolism; fatty acid metabolism. In terms of biological role, catalyzes the interconversion of (R)- and (S)-stereoisomers of alpha-methyl-branched-chain fatty acyl-CoA esters. Acts only on coenzyme A thioesters, not on free fatty acids, and accepts as substrates a wide range of alpha-methylacyl-CoAs, including pristanoyl-CoA, trihydroxycoprostanoyl-CoA (an intermediate in bile acid synthesis), and arylpropionic acids like the anti-inflammatory drug ibuprofen (2-(4-isobutylphenyl)propionic acid) but neither 3-methyl-branched nor linear-chain acyl-CoAs. This is Alpha-methylacyl-CoA racemase (AMACR) from Homo sapiens (Human).